The following is a 278-amino-acid chain: MEMLEEHRCFEGWQQRWRHDSSTLNCPMTFSIFLPPPRDHTPPPVLYWLSGLTCNDENFTIKAGAQRVAAELGIVLVMPDTSPRGEQVANDDGYDLGQGAGFYLNATQPPWATHYRMYDYLRDELPALVQSQFNVSDRCAISGHSMGGHGALIMALKNPGKYTSVSAFAPIVNPCSVPWGIKAFSSYLGEDKNAWLEWDSCALMYASNAQDAIPTLIDQGDNDQFLADQLQPAVLAEAARQKAWPMTLRIQPGYDHSYYFIASFIEDHLRFHAQYLLK.

Active-site charge relay system residues include S145, D223, and H256.

It belongs to the esterase D family.

The catalysed reaction is S-formylglutathione + H2O = formate + glutathione + H(+). Serine hydrolase involved in the detoxification of formaldehyde. Hydrolyzes S-formylglutathione to glutathione and formate. This is S-formylglutathione hydrolase YeiG (yeiG) from Escherichia coli O139:H28 (strain E24377A / ETEC).